A 295-amino-acid polypeptide reads, in one-letter code: Phosphoribosylaminoimidazole-succinocarboxamide synthase (295 aa).

It belongs to the SAICAR synthetase family.

The enzyme catalyses 5-amino-1-(5-phospho-D-ribosyl)imidazole-4-carboxylate + L-aspartate + ATP = (2S)-2-[5-amino-1-(5-phospho-beta-D-ribosyl)imidazole-4-carboxamido]succinate + ADP + phosphate + 2 H(+). It functions in the pathway purine metabolism; IMP biosynthesis via de novo pathway; 5-amino-1-(5-phospho-D-ribosyl)imidazole-4-carboxamide from 5-amino-1-(5-phospho-D-ribosyl)imidazole-4-carboxylate: step 1/2. In Nitrosomonas europaea (strain ATCC 19718 / CIP 103999 / KCTC 2705 / NBRC 14298), this protein is Phosphoribosylaminoimidazole-succinocarboxamide synthase.